We begin with the raw amino-acid sequence, 188 residues long: uncharacterized protein (188 aa).

A disordered region spans residues 57-80; sequence NDDVAPVAEGPKQERRSPSRNIGR.

Belongs to the transposase 25 family.

This is an uncharacterized protein from Sinorhizobium fredii (strain NBRC 101917 / NGR234).